We begin with the raw amino-acid sequence, 437 residues long: Probable N-acetylmuramidase (437 aa).

A signal peptide spans Met1–Ala57. Disordered stretches follow at residues Ser217 to Thr244, Ser291 to Thr319, and Ala367 to Ala392. The 44-residue stretch at Thr243 to Leu286 folds into the LysM 1 domain. The span at Ser291–Ser317 shows a compositional bias: low complexity. In terms of domain architecture, LysM 2 spans Thr319–Val362. A LysM 3 domain is found at Ser393 to Ile436.

It belongs to the glycosyl hydrolase 73 family.

The protein resides in the secreted. The enzyme catalyses Hydrolysis of (1-&gt;4)-beta-linkages between N-acetylmuramic acid and N-acetyl-D-glucosamine residues in a peptidoglycan and between N-acetyl-D-glucosamine residues in chitodextrins.. Hydrolyzes the cell wall of L.lactis and M.lysodeikticus. Required for cell separation during growth. The chain is Probable N-acetylmuramidase (acmA) from Lactococcus lactis subsp. cremoris (Streptococcus cremoris).